The sequence spans 68 residues: Ferredoxin Fdx (68 aa).

[3Fe-4S] cluster-binding residues include Cys12, Gln13, Ala16, Cys18, and Cys56.

It depends on [3Fe-4S] cluster as a cofactor.

In terms of biological role, ferredoxin that is the redox partner of cytochrome CYP51, a sterol 14alpha-demethylase encoded by an adjacent gene. The polypeptide is Ferredoxin Fdx (Mycobacterium tuberculosis (strain ATCC 25618 / H37Rv)).